The chain runs to 138 residues: Cysteine desulfuration protein SufE (138 aa).

Cys51 serves as the catalytic Cysteine persulfide intermediate.

The protein belongs to the SufE family. As to quaternary structure, homodimer. Interacts with SufS.

The protein resides in the cytoplasm. Its pathway is cofactor biosynthesis; iron-sulfur cluster biosynthesis. In terms of biological role, participates in cysteine desulfuration mediated by SufS. Cysteine desulfuration mobilizes sulfur from L-cysteine to yield L-alanine and constitutes an essential step in sulfur metabolism for biosynthesis of a variety of sulfur-containing biomolecules. Functions as a sulfur acceptor for SufS, by mediating the direct transfer of the sulfur atom from the S-sulfanylcysteine of SufS, an intermediate product of cysteine desulfuration process. This is Cysteine desulfuration protein SufE from Pectobacterium atrosepticum (strain SCRI 1043 / ATCC BAA-672) (Erwinia carotovora subsp. atroseptica).